Reading from the N-terminus, the 321-residue chain is Glucokinase (321 aa).

8–13 (GDVGGT) is an ATP binding site.

This sequence belongs to the bacterial glucokinase family.

The protein localises to the cytoplasm. The enzyme catalyses D-glucose + ATP = D-glucose 6-phosphate + ADP + H(+). The protein is Glucokinase of Enterobacter sp. (strain 638).